Here is a 482-residue protein sequence, read N- to C-terminus: D-inositol 3-phosphate glycosyltransferase (482 aa).

Residue His63 coordinates 1D-myo-inositol 3-phosphate. Residues 69–70 (QP) and Gly77 each bind UDP-N-acetyl-alpha-D-glucosamine. Residues 74-79 (DAGGMN), Lys132, Tyr165, Thr189, and Arg209 contribute to the 1D-myo-inositol 3-phosphate site. 3 residues coordinate UDP-N-acetyl-alpha-D-glucosamine: Arg289, Lys294, and Gln355. The Mg(2+) site is built by Tyr364, Arg365, and Ala367. Glu377 and Glu385 together coordinate UDP-N-acetyl-alpha-D-glucosamine. A Mg(2+)-binding site is contributed by Thr391.

Belongs to the glycosyltransferase group 1 family. MshA subfamily. As to quaternary structure, homodimer.

The enzyme catalyses 1D-myo-inositol 3-phosphate + UDP-N-acetyl-alpha-D-glucosamine = 1D-myo-inositol 2-acetamido-2-deoxy-alpha-D-glucopyranoside 3-phosphate + UDP + H(+). Catalyzes the transfer of a N-acetyl-glucosamine moiety to 1D-myo-inositol 3-phosphate to produce 1D-myo-inositol 2-acetamido-2-deoxy-glucopyranoside 3-phosphate in the mycothiol biosynthesis pathway. In Salinispora tropica (strain ATCC BAA-916 / DSM 44818 / JCM 13857 / NBRC 105044 / CNB-440), this protein is D-inositol 3-phosphate glycosyltransferase.